Consider the following 111-residue polypeptide: Large ribosomal subunit protein uL22 (111 aa).

It belongs to the universal ribosomal protein uL22 family. In terms of assembly, part of the 50S ribosomal subunit.

Its function is as follows. This protein binds specifically to 23S rRNA; its binding is stimulated by other ribosomal proteins, e.g. L4, L17, and L20. It is important during the early stages of 50S assembly. It makes multiple contacts with different domains of the 23S rRNA in the assembled 50S subunit and ribosome. Functionally, the globular domain of the protein is located near the polypeptide exit tunnel on the outside of the subunit, while an extended beta-hairpin is found that lines the wall of the exit tunnel in the center of the 70S ribosome. This chain is Large ribosomal subunit protein uL22, found in Geobacter sulfurreducens (strain ATCC 51573 / DSM 12127 / PCA).